The chain runs to 294 residues: Phosphoribosylaminoimidazole-succinocarboxamide synthase (294 aa).

Belongs to the SAICAR synthetase family.

The catalysed reaction is 5-amino-1-(5-phospho-D-ribosyl)imidazole-4-carboxylate + L-aspartate + ATP = (2S)-2-[5-amino-1-(5-phospho-beta-D-ribosyl)imidazole-4-carboxamido]succinate + ADP + phosphate + 2 H(+). It functions in the pathway purine metabolism; IMP biosynthesis via de novo pathway; 5-amino-1-(5-phospho-D-ribosyl)imidazole-4-carboxamide from 5-amino-1-(5-phospho-D-ribosyl)imidazole-4-carboxylate: step 1/2. In Rhodococcus jostii (strain RHA1), this protein is Phosphoribosylaminoimidazole-succinocarboxamide synthase.